The sequence spans 253 residues: Small ribosomal subunit protein uS2 (253 aa).

The protein belongs to the universal ribosomal protein uS2 family.

The sequence is that of Small ribosomal subunit protein uS2 from Cereibacter sphaeroides (strain ATCC 17023 / DSM 158 / JCM 6121 / CCUG 31486 / LMG 2827 / NBRC 12203 / NCIMB 8253 / ATH 2.4.1.) (Rhodobacter sphaeroides).